The sequence spans 194 residues: Fe/S biogenesis protein NfuA (194 aa).

Positions 152 and 155 each coordinate [4Fe-4S] cluster.

It belongs to the NfuA family. Homodimer. It depends on [4Fe-4S] cluster as a cofactor.

In terms of biological role, involved in iron-sulfur cluster biogenesis. Binds a 4Fe-4S cluster, can transfer this cluster to apoproteins, and thereby intervenes in the maturation of Fe/S proteins. Could also act as a scaffold/chaperone for damaged Fe/S proteins. The polypeptide is Fe/S biogenesis protein NfuA (Pseudomonas fluorescens (strain SBW25)).